The following is a 208-amino-acid chain: Peptidyl-tRNA hydrolase 2 (208 aa).

Low complexity predominate over residues 32-45; it reads SNASSTKKSSATLL. The segment at 32–81 is disordered; that stretch reads SNASSTKKSSATLLRSKEMKEGKLHNDTDEEESESEDESDEDEDIESTSL. Over residues 46–58 the composition is skewed to basic and acidic residues; the sequence is RSKEMKEGKLHND. Positions 59 to 77 are enriched in acidic residues; sequence TDEEESESEDESDEDEDIE. Lys152 is covalently cross-linked (Glycyl lysine isopeptide (Lys-Gly) (interchain with G-Cter in ubiquitin)).

The protein belongs to the PTH2 family.

Its subcellular location is the cytoplasm. The enzyme catalyses an N-acyl-L-alpha-aminoacyl-tRNA + H2O = an N-acyl-L-amino acid + a tRNA + H(+). In terms of biological role, the natural substrate for this enzyme may be peptidyl-tRNAs which drop off the ribosome during protein synthesis. This is Peptidyl-tRNA hydrolase 2 from Saccharomyces cerevisiae (strain ATCC 204508 / S288c) (Baker's yeast).